A 191-amino-acid chain; its full sequence is Fe/S biogenesis protein NfuA (191 aa).

Cys-149 and Cys-152 together coordinate [4Fe-4S] cluster.

It belongs to the NfuA family. As to quaternary structure, homodimer. Requires [4Fe-4S] cluster as cofactor.

Involved in iron-sulfur cluster biogenesis. Binds a 4Fe-4S cluster, can transfer this cluster to apoproteins, and thereby intervenes in the maturation of Fe/S proteins. Could also act as a scaffold/chaperone for damaged Fe/S proteins. This Salmonella choleraesuis (strain SC-B67) protein is Fe/S biogenesis protein NfuA.